The primary structure comprises 818 residues: Serine/threonine-protein kinase PTK2/STK2 (818 aa).

Positions 28 to 39 are enriched in polar residues; the sequence is NSSSHTDNSSLL. Disordered regions lie at residues 28-100 and 117-177; these read NSSS…GSVS and NPYL…SHHF. Thr56 bears the Phosphothreonine mark. The segment covering 57–81 has biased composition (low complexity); it reads SPSISGSGSGGNSPSSSAGARQRSA. Residues Ser59 and Ser80 each carry the phosphoserine modification. Basic and acidic residues predominate over residues 136–160; it reads TRDRDRAVLDREKEKERARNKERNT. In terms of domain architecture, Protein kinase spans 255–562; sequence DTDNKPIGSG…MDDLFNDPFF (308 aa). Residues 261-269 and Lys285 contribute to the ATP site; that span reads IGSGGSSEV. Residue Asp388 is the Proton acceptor of the active site. Residues 585 to 595 show a composition bias toward polar residues; it reads STSTNDFSENS. Residues 585–795 form a disordered region; the sequence is STSTNDFSEN…SVSSSKKKKV (211 aa). A phosphoserine mark is found at Ser623 and Ser632. 2 stretches are compositionally biased toward basic and acidic residues: residues 638 to 651 and 659 to 685; these read KVKD…HDVG and TKPK…KVIE. Ser694 carries the post-translational modification Phosphoserine. Thr700 is subject to Phosphothreonine. At Ser711 the chain carries Phosphoserine. Low complexity predominate over residues 727–736; it reads TPTTPTHNGP. A Phosphothreonine modification is found at Thr737. Phosphoserine occurs at positions 752, 755, 778, and 781. The span at 755-767 shows a compositional bias: polar residues; the sequence is SLKSETPASTKNF. The span at 768–789 shows a compositional bias: low complexity; it reads SAPNVSSSSNSLRSLGSPSVSS.

It belongs to the protein kinase superfamily. Ser/Thr protein kinase family.

It localises to the nucleus. Its subcellular location is the cytoplasm. It catalyses the reaction L-seryl-[protein] + ATP = O-phospho-L-seryl-[protein] + ADP + H(+). It carries out the reaction L-threonyl-[protein] + ATP = O-phospho-L-threonyl-[protein] + ADP + H(+). Essential determinant for high-affinity spermidine transport. Required for the activation of the plasma membrane proton pump PMA1 via phosphorylation of 'Ser-899'. The sequence is that of Serine/threonine-protein kinase PTK2/STK2 (PTK2) from Saccharomyces cerevisiae (strain ATCC 204508 / S288c) (Baker's yeast).